The primary structure comprises 1025 residues: MKFFALFIYRPVATILISLAITLCGILGFRLLPVAPLPQVDFPVIMVSASLPGASPETMASSVATPLERSLGRIAGVNEMTSSSSLGSTRIILEFNFDRDINGAARDVQAAINAAQSLLPSGMPSRPTYRKANPSDAPIMILTLTSDTYSQGELYDFASTQLAQTIAQIDGVGDVDVGGSSLPAVRVDLNPQALFNQGVSLDAVRTAISDANVRKPQGALEDSAHRWQVQTNDELKTAADYQPLIVHYQNGAAVRLGDVATVSDSVQDVRNAGMTNAKPAILLMIRKLPEANIIQTVDSIRARLPELQQTIPAAIDLQIAQDRSPTIRASLEEVEQTLVISVALVILVVFLFLRSGRATLIPAVAVPVSLIGTFAAMYLCGFSLNNLSLMALTIATGFVVDDAIVVLENISRHLEAGMKPLQAALQGSREVGFTVLSMSLSLVAVFLPLLLMGGLPGRLLREFAVTLSVAIGISLAVSLTLTPMMCGWLLKSGKPHQPTRNRGFGRLLVAVQGGYGKSLKWVLKHSRLTGLVVLGTIALSVWLYISIPKTFFPEQDTGVLMGGIQADQSISFQAMRGKLQDFMKIIREDPAVDNVTGFTGGSRVNSGMMFITLKPRDQRHETAQQVIDRLRKKLANEPGANLFLMAVQDIRVGGRQSNASYQYTLLSDDLSALREWEPKIRKALAALPELADVNSDQQDNGAEMDLVYDRDTMSRLGISVQDANNLLNNAFGQRQISTIYQPLNQYKVVMEVDPAYTQDVSALDKMFVINSDGKPIPLAYFAKWQPANAPLSVNHQGLSAASTISFNLPTGRSLSEASEAIDRAMTQLGVPSSVRGSFAGTAQVFQQTMNAQVILILAAIATVYIVLGVLYESYVHPLTILSTLPSAGVGALLALEIFDAPFSLIALIGIMLLIGIVKKNAIMMVDFALEAQRNGNLTPEEAIFQACLLRFRPIMMTTLAALFGALPLVLSGGDGSELRQPLGITIVGGLVMSQLLTLYTTPVVYLFFDRLRLRFSRHSSQPVSE.

A run of 12 helical transmembrane segments spans residues 15-35, 333-353, 360-380, 387-407, 431-451, 469-489, 528-548, 851-871, 875-895, 897-917, 953-973, and 984-1004; these read ILISLAITLCGILGFRLLPVA, EVEQTLVISVALVILVVFLFL, LIPAVAVPVSLIGTFAAMYLC, LSLMALTIATGFVVDDAIVVL, VGFTVLSMSLSLVAVFLPLLL, VAIGISLAVSLTLTPMMCGWL, LTGLVVLGTIALSVWLYISIP, AQVILILAAIATVYIVLGVLY, VHPLTILSTLPSAGVGALLAL, IFDAPFSLIALIGIMLLIGIV, PIMMTTLAALFGALPLVLSGG, and ITIVGGLVMSQLLTLYTTPVV.

This sequence belongs to the resistance-nodulation-cell division (RND) (TC 2.A.6) family. MdtC subfamily. In terms of assembly, part of a tripartite efflux system composed of MdtA, MdtB and MdtC. MdtC forms a heteromultimer with MdtB.

It is found in the cell inner membrane. The polypeptide is Multidrug resistance protein MdtC (Klebsiella pneumoniae subsp. pneumoniae (strain ATCC 700721 / MGH 78578)).